The sequence spans 209 residues: dITP/XTP pyrophosphatase (209 aa).

7–12 (SSHGYK) is a substrate binding site. The active-site Proton acceptor is the Asp70. Asp70 serves as a coordination point for Mg(2+). Residues Ser71, 154–157 (FGYD), Lys177, and 182–183 (HR) contribute to the substrate site.

The protein belongs to the HAM1 NTPase family. As to quaternary structure, homodimer. The cofactor is Mg(2+).

It catalyses the reaction XTP + H2O = XMP + diphosphate + H(+). The enzyme catalyses dITP + H2O = dIMP + diphosphate + H(+). It carries out the reaction ITP + H2O = IMP + diphosphate + H(+). In terms of biological role, pyrophosphatase that catalyzes the hydrolysis of nucleoside triphosphates to their monophosphate derivatives, with a high preference for the non-canonical purine nucleotides XTP (xanthosine triphosphate), dITP (deoxyinosine triphosphate) and ITP. Seems to function as a house-cleaning enzyme that removes non-canonical purine nucleotides from the nucleotide pool, thus preventing their incorporation into DNA/RNA and avoiding chromosomal lesions. This is dITP/XTP pyrophosphatase from Chlamydia muridarum (strain MoPn / Nigg).